The following is a 780-amino-acid chain: Lon protease (780 aa).

One can recognise a Lon N-terminal domain in the interval 11 to 204; it reads IPVLPLRDVV…RLMAIMESEI (194 aa). 356 to 363 contributes to the ATP binding site; that stretch reads GPPGVGKT. A Lon proteolytic domain is found at 592–773; it reads KNQIGQVIGL…KEVLNLSLEN (182 aa). Catalysis depends on residues Ser679 and Lys722.

It belongs to the peptidase S16 family. Homohexamer. Organized in a ring with a central cavity.

The protein resides in the cytoplasm. The enzyme catalyses Hydrolysis of proteins in presence of ATP.. In terms of biological role, ATP-dependent serine protease that mediates the selective degradation of mutant and abnormal proteins as well as certain short-lived regulatory proteins. Required for cellular homeostasis and for survival from DNA damage and developmental changes induced by stress. Degrades polypeptides processively to yield small peptide fragments that are 5 to 10 amino acids long. Binds to DNA in a double-stranded, site-specific manner. The protein is Lon protease of Buchnera aphidicola subsp. Baizongia pistaciae (strain Bp).